A 350-amino-acid chain; its full sequence is Isopentenyl-diphosphate delta-isomerase (350 aa).

Arg15–Lys16 contributes to the substrate binding site. FMN contacts are provided by residues Ser73, Ser74–Thr76, Ser104, and Asn132. Residue Ser104–Arg106 participates in substrate binding. A substrate-binding site is contributed by Gln167. Glu168 provides a ligand contact to Mg(2+). Residues Lys199, Thr229, Gly279–Arg281, and Ala300–Met301 contribute to the FMN site.

It belongs to the IPP isomerase type 2 family. In terms of assembly, homooctamer. Dimer of tetramers. The cofactor is FMN. NADPH is required as a cofactor. Requires Mg(2+) as cofactor.

It localises to the cytoplasm. It carries out the reaction isopentenyl diphosphate = dimethylallyl diphosphate. In terms of biological role, involved in the biosynthesis of isoprenoids. Catalyzes the 1,3-allylic rearrangement of the homoallylic substrate isopentenyl (IPP) to its allylic isomer, dimethylallyl diphosphate (DMAPP). The sequence is that of Isopentenyl-diphosphate delta-isomerase from Nostoc sp. (strain PCC 7120 / SAG 25.82 / UTEX 2576).